Reading from the N-terminus, the 2971-residue chain is Reticulocyte-binding protein homolog 1 (2971 aa).

The N-terminal stretch at 1–20 (MQRWIFCNIVLHILIYLAEF) is a signal peptide. Residues 21–2897 (SHEQESYSSN…KKQKNGNHER (2877 aa)) are Extracellular-facing. Residues 30 to 50 (NEKIRKDYSDDNNYEPTPSYE) form a disordered region. 7 N-linked (GlcNAc...) asparagine glycosylation sites follow: N70, N78, N87, N135, N286, N384, and N417. Positions 500 to 833 (LQIVQQKLLE…MQQGYNNLTN (334 aa)) are erythrocyte binding domain (EBD). LRR repeat units lie at residues 528-553 (YKNIHDEILNKKNNEITKIIINNIKD) and 607-633 (LNNLHTLKQVQNNKIKYEEHIKQILQK). N685 carries an N-linked (GlcNAc...) asparagine glycan. LRR repeat units lie at residues 736–758 (IDTISKYILKQKDIELTQHVYTD) and 785–808 (QETLKQITHIVNNIKTIKKDLLKE). N830, N892, N1000, and N1010 each carry an N-linked (GlcNAc...) asparagine glycan. 2 LRR repeats span residues 993–1018 (LKILKILNISLKACEKNNKSINTLND) and 1356–1381 (LRNINLQEIKNNIIKIFKEFKSAHKE). N1425 carries an N-linked (GlcNAc...) asparagine glycan. One copy of the LRR 7 repeat lies at 1466–1489 (AKYMENIDTYKNNIEIISKQINPE). N1496 carries N-linked (GlcNAc...) asparagine glycosylation. LRR repeat units lie at residues 1512-1537 (YKQINNIIINSNQLKNEAFTIDELQN), 1586-1609 (SQNINHVSIYTEQLHNLYIKLEEE), and 1611-1636 (EQMKTLYHKSNVLHNQINFNEDAFIN). N1664, N1692, N1718, N1816, and N1844 each carry an N-linked (GlcNAc...) asparagine glycan. LRR repeat units follow at residues 1700–1723 (LQELKQVQENVEKVKDIYNQTIKY) and 1809–1834 (LKLFVDINSTNNNLDNMLSEINSIQN). One copy of the LRR 13 repeat lies at 1880 to 1903 (QNEIRNMNLEKNFMLDKSKKIDEE). 2 N-linked (GlcNAc...) asparagine glycosylation sites follow: N1913 and N1918. The stretch at 1944–1967 (KENIEKIKQEINTLSDVFKKPFFF) is one LRR 14 repeat. N-linked (GlcNAc...) asparagine glycosylation is found at N2054, N2207, N2289, N2300, N2338, and N2405. Residues 2523–2548 (IKDIDNVFIKIQNNKFEQIQKYIEII) form an LRR 15 repeat. N2598 and N2752 each carry an N-linked (GlcNAc...) asparagine glycan. An LRR 16 repeat occupies 2731 to 2754 (ENIFDNIQLKKKDIDDIIININNT). Basic and acidic residues-rich tracts occupy residues 2773–2782 (KVDEKSEINN) and 2795–2804 (QKNKIKDHNL). 2 disordered regions span residues 2773 to 2825 (KVDE…MKEQ) and 2840 to 2862 (HHVHNHNHNHNQNQKDSTKLQEQ). A glycan (N-linked (GlcNAc...) asparagine) is linked at N2811. Positions 2814-2825 (EESHQNEQMKEQ) are enriched in basic and acidic residues. A helical transmembrane segment spans residues 2898–2918 (MYFASGIVVSILFLSSLGFVI). The Cytoplasmic segment spans residues 2919–2971 (NSKNNKQEYDKEQEKQQQNDFVCDNNKMDDKSTQKYGRNQEEVMEISFDNDYI).

As to quaternary structure, may in part interact with AMA1 in the moving tight junction between the parasite and the erythrocyte membranes; the interaction may facilitate junction formation and active invasion. Post-translationally, proteolytically processed into multiple fragments following schizont rupture. In the mature schizont stage prior to merozoite release, full length RH1 is processed post-Golgi into a 240 kDa N-terminal form and a 120 kDa C-terminal form containing the transmembrane region. Both forms appear not to form a complex. However, they appear to remain in close proximity in late schizonts. Following merozoite invasion of host erythrocytes, the 240 kDa form is further processed into a 140 kDa form which may be involved in the disengagement of the ligand-receptor complex required during the invasion process. Also, the 120 kDa is further cleaved into a 110 kDa form and a transmembrane 9 kDa form probably by ROM4.

It localises to the cell membrane. It is found in the secreted. The protein resides in the cell junction. The protein localises to the tight junction. Its subcellular location is the cytoplasmic vesicle. It localises to the secretory vesicle. It is found in the rhoptry. Functionally, during the asexual blood stage, binds to a sialic acid containing receptor on the surface of the host erythrocyte and thus is involved in merozoite invasion. Binds erythrocytes via a neuraminidase sensitive and trypsin-, chymotrypsin-resistant receptor. After merozoite attachment and reorientation, RH1 binding to its erythrocyte receptor triggers an increase in intracellular Ca(2+) within the parasite resulting in the release of microneme proteins such as EBA175 which in turn leads to the formation of the tight junction between parasite and host cell. The polypeptide is Reticulocyte-binding protein homolog 1 (Plasmodium falciparum (isolate 3D7)).